The sequence spans 83 residues: Hainantoxin-III 9 (83 aa).

The N-terminal stretch at 1–21 (MKASMFLALAGLALLFVVCYA) is a signal peptide. A propeptide spanning residues 22 to 48 (SESEEKEFPIELLSKIFAVDVFKGEER) is cleaved from the precursor. 3 disulfides stabilise this stretch: Cys50/Cys65, Cys57/Cys70, and Cys64/Cys77. Residue Leu81 is modified to Leucine amide.

Belongs to the neurotoxin 10 (Hwtx-1) family. 15 (Hntx-3) subfamily. In terms of assembly, monomer. As to expression, expressed by the venom gland.

The protein localises to the secreted. Its function is as follows. Selective antagonist of neuronal tetrodotoxin (TTX)-sensitive voltage-gated sodium channels (IC(50)=1270 nM on Nav1.1/SCN1A, 270 nM on Nav1.2/SCN2A, 491 nM on Nav1.3/SCN3A and 232 nM on Nav1.7/SCN9A). This toxin suppress Nav1.7 current amplitude without significantly altering the activation, inactivation, and repriming kinetics. Short extreme depolarizations partially activate the toxin-bound channel, indicating voltage-dependent inhibition of this toxin. This toxin increases the deactivation of the Nav1.7 current after extreme depolarizations. The toxin-Nav1.7 complex is gradually dissociated upon prolonged strong depolarizations in a voltage-dependent manner, and the unbound toxin rebinds to Nav1.7 after a long repolarization. Moreover, analysis of chimeric channels showed that the DIIS3-S4 linker is critical for toxin binding to Nav1.7. These data are consistent with this toxin interacting with Nav1.7 site 4 and trapping the domain II voltage sensor in the closed state. The protein is Hainantoxin-III 9 of Cyriopagopus hainanus (Chinese bird spider).